The sequence spans 271 residues: Ribosomal RNA small subunit methyltransferase A (271 aa).

S-adenosyl-L-methionine is bound by residues histidine 18, leucine 20, glycine 45, glutamate 66, aspartate 91, and asparagine 113.

It belongs to the class I-like SAM-binding methyltransferase superfamily. rRNA adenine N(6)-methyltransferase family. RsmA subfamily.

The protein localises to the cytoplasm. The enzyme catalyses adenosine(1518)/adenosine(1519) in 16S rRNA + 4 S-adenosyl-L-methionine = N(6)-dimethyladenosine(1518)/N(6)-dimethyladenosine(1519) in 16S rRNA + 4 S-adenosyl-L-homocysteine + 4 H(+). Functionally, specifically dimethylates two adjacent adenosines (A1518 and A1519) in the loop of a conserved hairpin near the 3'-end of 16S rRNA in the 30S particle. May play a critical role in biogenesis of 30S subunits. The sequence is that of Ribosomal RNA small subunit methyltransferase A from Baumannia cicadellinicola subsp. Homalodisca coagulata.